Here is a 469-residue protein sequence, read N- to C-terminus: Glutamate--tRNA ligase (469 aa).

The 'HIGH' region signature appears at 12-22 (PSPTGFIHLGN). The 'KMSKS' region motif lies at 244 to 248 (KMSKR). Lys-247 contributes to the ATP binding site.

This sequence belongs to the class-I aminoacyl-tRNA synthetase family. Glutamate--tRNA ligase type 1 subfamily. As to quaternary structure, monomer.

Its subcellular location is the cytoplasm. It catalyses the reaction tRNA(Glu) + L-glutamate + ATP = L-glutamyl-tRNA(Glu) + AMP + diphosphate. Catalyzes the attachment of glutamate to tRNA(Glu) in a two-step reaction: glutamate is first activated by ATP to form Glu-AMP and then transferred to the acceptor end of tRNA(Glu). This chain is Glutamate--tRNA ligase, found in Acidovorax sp. (strain JS42).